Here is a 170-residue protein sequence, read N- to C-terminus: Lipoprotein signal peptidase (170 aa).

A run of 3 helical transmembrane segments spans residues 12–32 (WYWVVVLVFVADQLSKQWVLA), 67–87 (WQRWLFTLVAVGFSTLLTVWL), and 93–113 (GLWRLNLAYTLVIGGALGNLI). Catalysis depends on residues aspartate 123 and aspartate 141. The helical transmembrane segment at 133-153 (HFPAFNIADSAICVGAGLIIL) threads the bilayer.

Belongs to the peptidase A8 family.

The protein localises to the cell inner membrane. It catalyses the reaction Release of signal peptides from bacterial membrane prolipoproteins. Hydrolyzes -Xaa-Yaa-Zaa-|-(S,diacylglyceryl)Cys-, in which Xaa is hydrophobic (preferably Leu), and Yaa (Ala or Ser) and Zaa (Gly or Ala) have small, neutral side chains.. It functions in the pathway protein modification; lipoprotein biosynthesis (signal peptide cleavage). Its function is as follows. This protein specifically catalyzes the removal of signal peptides from prolipoproteins. The protein is Lipoprotein signal peptidase of Shewanella loihica (strain ATCC BAA-1088 / PV-4).